The primary structure comprises 511 residues: Coatomer subunit delta (511 aa).

Positions 168 to 177 (QARRDAERQG) are enriched in basic and acidic residues. Residues 168–188 (QARRDAERQGKKAPGFGGFGS) are disordered. Position 223 is a phosphoserine (Ser-223). An N6-acetyllysine mark is found at Lys-233 and Lys-241. Residue Ser-244 is modified to Phosphoserine. One can recognise an MHD domain in the interval 271 to 511 (MESVHMKIEE…TFLVDKYEIL (241 aa)). N6-acetyllysine is present on residues Lys-309 and Lys-351. At Ser-493 the chain carries Phosphoserine.

This sequence belongs to the adaptor complexes medium subunit family. Delta-COP subfamily. As to quaternary structure, oligomeric complex that consists of at least the alpha, beta, beta', gamma, delta, epsilon and zeta subunits. In terms of tissue distribution, ubiquitously expressed.

The protein localises to the cytoplasm. The protein resides in the golgi apparatus membrane. It is found in the cytoplasmic vesicle. Its subcellular location is the COPI-coated vesicle membrane. In terms of biological role, component of the coatomer, a cytosolic protein complex that binds to dilysine motifs and reversibly associates with Golgi non-clathrin-coated vesicles, which further mediate biosynthetic protein transport from the ER, via the Golgi up to the trans Golgi network. The coatomer complex is required for budding from Golgi membranes, and is essential for the retrograde Golgi-to-ER transport of dilysine-tagged proteins. In mammals, the coatomer can only be recruited by membranes associated to ADP-ribosylation factors (ARFs), which are small GTP-binding proteins; the complex also influences the Golgi structural integrity, as well as the processing, activity, and endocytic recycling of LDL receptors. This is Coatomer subunit delta (ARCN1) from Homo sapiens (Human).